The primary structure comprises 298 residues: uncharacterized protein (298 aa).

Positions Ala264–Lys298 are disordered. The segment covering Lys287–Lys298 has biased composition (basic residues).

This is an uncharacterized protein from Mus musculus (Mouse).